We begin with the raw amino-acid sequence, 547 residues long: Chaperonin GroEL (547 aa).

ATP contacts are provided by residues 30-33, lysine 51, 87-91, glycine 415, and aspartate 496; these read TLGP and DGTTT. The disordered stretch occupies residues 527–547; it reads SDKAEPMPMRGGMGGMGGMDF. Gly residues predominate over residues 537-547; the sequence is GGMGGMGGMDF.

It belongs to the chaperonin (HSP60) family. In terms of assembly, forms a cylinder of 14 subunits composed of two heptameric rings stacked back-to-back. Interacts with the co-chaperonin GroES.

It is found in the cytoplasm. The enzyme catalyses ATP + H2O + a folded polypeptide = ADP + phosphate + an unfolded polypeptide.. Functionally, together with its co-chaperonin GroES, plays an essential role in assisting protein folding. The GroEL-GroES system forms a nano-cage that allows encapsulation of the non-native substrate proteins and provides a physical environment optimized to promote and accelerate protein folding. The sequence is that of Chaperonin GroEL from Rickettsia rickettsii (strain Sheila Smith).